Reading from the N-terminus, the 478-residue chain is MELLTFTCCPFEGQMQQKKRRFDANLVQLQESEHRNDQINETVDAELTNECWKLYMRLKPSNEEVSRRQQFVDKLRTILSTEIKDAKLDLFVFGSTENNLAIQQSDVDVCIITNGSKYLNSTCQLAQLLYSYGMKQIVCVSRARVPIVKIWDPQFDIHCDLNINNDVAKINTKMLRLFVSIDPRVRPLGLIIKYWAKQRALCDAAGSGTITSYTISCMLVNFLQTRNPPILPAMLDLMSNDDNKMFVDDIVGFKEKATLNKTSLGRLLIDFFYYYGFSFNYLDSVVSVRSGTVLNKQEKGWAMEVNNSLCVEEPFNTARNLANTADNPSVKGLQSEFQRAFRLMSENNACERLCKICEEYQFLDITNEANYGNTNTPFNTAYESFGCNHTVLPEAAAYPKPYYPPQITLSDGGNMNFLYYIPDESNHQSYENKANRDSDFQGQTSLTQGSAPPWHYIPCQSWLVWYPSEDASNPASGN.

2 residues coordinate Mg(2+): aspartate 106 and aspartate 108. Positions 263 to 317 (SLGRLLIDFFYYYGFSFNYLDSVVSVRSGTVLNKQEKGWAMEVNNSLCVEEPFNT) constitute a PAP-associated domain. The segment at 428–447 (QSYENKANRDSDFQGQTSLT) is disordered.

This sequence belongs to the DNA polymerase type-B-like family. Requires Mg(2+) as cofactor. Mn(2+) serves as cofactor.

The protein localises to the cytoplasm. The protein resides in the nucleus. The catalysed reaction is RNA(n) + ATP = RNA(n)-3'-adenine ribonucleotide + diphosphate. In Schizosaccharomyces pombe (strain 972 / ATCC 24843) (Fission yeast), this protein is Poly(A) RNA polymerase cid11 (cid11).